The primary structure comprises 542 residues: Anaerobic glycerol-3-phosphate dehydrogenase subunit A (542 aa).

An FAD-binding site is contributed by 10–38 (DVIIIGGGATGAGIARDCALRGLRVILVE).

This sequence belongs to the FAD-dependent glycerol-3-phosphate dehydrogenase family. Composed of a catalytic GlpA/B dimer and of membrane bound GlpC. FAD is required as a cofactor. The cofactor is FMN.

The protein resides in the cell inner membrane. It catalyses the reaction a quinone + sn-glycerol 3-phosphate = dihydroxyacetone phosphate + a quinol. It functions in the pathway polyol metabolism; glycerol degradation via glycerol kinase pathway; glycerone phosphate from sn-glycerol 3-phosphate (anaerobic route): step 1/1. Its function is as follows. Conversion of glycerol 3-phosphate to dihydroxyacetone. Uses fumarate or nitrate as electron acceptor. The protein is Anaerobic glycerol-3-phosphate dehydrogenase subunit A (glpA) of Escherichia coli O157:H7.